The following is a 215-amino-acid chain: Probable transaldolase (215 aa).

The active-site Schiff-base intermediate with substrate is Lys-83.

This sequence belongs to the transaldolase family. Type 3B subfamily.

It localises to the cytoplasm. The enzyme catalyses D-sedoheptulose 7-phosphate + D-glyceraldehyde 3-phosphate = D-erythrose 4-phosphate + beta-D-fructose 6-phosphate. Its pathway is carbohydrate degradation; pentose phosphate pathway; D-glyceraldehyde 3-phosphate and beta-D-fructose 6-phosphate from D-ribose 5-phosphate and D-xylulose 5-phosphate (non-oxidative stage): step 2/3. Its function is as follows. Transaldolase is important for the balance of metabolites in the pentose-phosphate pathway. The protein is Probable transaldolase of Streptococcus agalactiae serotype III (strain NEM316).